Reading from the N-terminus, the 457-residue chain is tRNA-2-methylthio-N(6)-dimethylallyladenosine synthase (457 aa).

Positions 3-120 (KKVYVKTFGC…LPQMIDARRE (118 aa)) constitute an MTTase N-terminal domain. Positions 12, 49, 83, 157, 161, and 164 each coordinate [4Fe-4S] cluster. One can recognise a Radical SAM core domain in the interval 143–377 (RVEGPSAFVS…QATIEENVAR (235 aa)). The region spanning 380–447 (QSMLGKVERI…PHSLRGELVL (68 aa)) is the TRAM domain.

Belongs to the methylthiotransferase family. MiaB subfamily. In terms of assembly, monomer. [4Fe-4S] cluster serves as cofactor.

Its subcellular location is the cytoplasm. It catalyses the reaction N(6)-dimethylallyladenosine(37) in tRNA + (sulfur carrier)-SH + AH2 + 2 S-adenosyl-L-methionine = 2-methylsulfanyl-N(6)-dimethylallyladenosine(37) in tRNA + (sulfur carrier)-H + 5'-deoxyadenosine + L-methionine + A + S-adenosyl-L-homocysteine + 2 H(+). Catalyzes the methylthiolation of N6-(dimethylallyl)adenosine (i(6)A), leading to the formation of 2-methylthio-N6-(dimethylallyl)adenosine (ms(2)i(6)A) at position 37 in tRNAs that read codons beginning with uridine. The protein is tRNA-2-methylthio-N(6)-dimethylallyladenosine synthase of Burkholderia thailandensis (strain ATCC 700388 / DSM 13276 / CCUG 48851 / CIP 106301 / E264).